We begin with the raw amino-acid sequence, 391 residues long: 3-ketoacyl-CoA thiolase (391 aa).

The active-site Acyl-thioester intermediate is C95. Catalysis depends on proton acceptor residues H347 and C377.

It belongs to the thiolase-like superfamily. Thiolase family. As to quaternary structure, heterotetramer of two alpha chains (FadB) and two beta chains (FadA).

It is found in the cytoplasm. The catalysed reaction is an acyl-CoA + acetyl-CoA = a 3-oxoacyl-CoA + CoA. The protein operates within lipid metabolism; fatty acid beta-oxidation. Functionally, catalyzes the final step of fatty acid oxidation in which acetyl-CoA is released and the CoA ester of a fatty acid two carbons shorter is formed. This chain is 3-ketoacyl-CoA thiolase, found in Pseudomonas putida (strain ATCC 47054 / DSM 6125 / CFBP 8728 / NCIMB 11950 / KT2440).